Consider the following 447-residue polypeptide: Protein cortex (447 aa).

WD repeat units follow at residues 108–148 (TYSY…IGHG), 149–188 (FAEY…KIMS), 198–237 (NMNC…ISWR), 281–325 (DSDW…VRDT), 344–380 (GELV…DQWG), and 384–423 (SGLD…NKMK). A D-box motif is present at residues 384–395 (SGLDRVRTMIFS).

Belongs to the WD repeat CORT family.

The protein localises to the cytoplasm. Controls wing pigmentation patterning by regulating scale cell development, thereby playing a key role in mimicry and crypsis. Probably acts as an activator of the anaphase promoting complex/cyclosome (APC/C) that promotes the ubiquitin ligase activity and substrate specificity of the APC/C. The chain is Protein cortex from Heliconius melpomene (Postman butterfly).